A 137-amino-acid polypeptide reads, in one-letter code: MTFNLCVLTPNRIVWDSEVKEIILSTNSGQIGVLQNHAPIATALDIGILRIRLKDRWLTMALMGGFARIGNNEITILVTDAESASDINPQEAQQTLQIAEANLNKAEGKRETIEANLSLRRAKTRVEAIVETIKRIS.

It belongs to the ATPase epsilon chain family. In terms of assembly, F-type ATPases have 2 components, CF(1) - the catalytic core - and CF(0) - the membrane proton channel. CF(1) has five subunits: alpha(3), beta(3), gamma(1), delta(1), epsilon(1). CF(0) has three main subunits: a, b and c.

Its subcellular location is the plastid. It is found in the chloroplast thylakoid membrane. In terms of biological role, produces ATP from ADP in the presence of a proton gradient across the membrane. In Pisum sativum (Garden pea), this protein is ATP synthase epsilon chain, chloroplastic.